A 206-amino-acid chain; its full sequence is Cytochrome b6-f complex iron-sulfur subunit, chloroplastic (206 aa).

The transit peptide at 1–29 (MAMLSSRRVAAPAKASAIRRSRVMPVVRA) directs the protein to the chloroplast. A helical transmembrane segment spans residues 39-68 (MNKRNIMNLILAGGAGLPITTLALGYGAFF). The region spanning 92-188 (AGEWLKTHLA…CDVAESGLVT (97 aa)) is the Rieske domain. [2Fe-2S] cluster is bound by residues Cys134, His136, Cys152, and His155. Cys139 and Cys154 are joined by a disulfide.

The protein belongs to the Rieske iron-sulfur protein family. In terms of assembly, the 4 large subunits of the cytochrome b6-f complex are cytochrome b6, subunit IV (17 kDa polypeptide, petD), cytochrome f and the Rieske protein, while the 4 small subunits are petG, petL, petM and petN. The complex functions as a dimer. The cofactor is [2Fe-2S] cluster.

It localises to the plastid. The protein localises to the chloroplast thylakoid membrane. The catalysed reaction is 2 oxidized [plastocyanin] + a plastoquinol + 2 H(+)(in) = 2 reduced [plastocyanin] + a plastoquinone + 4 H(+)(out). Functionally, component of the cytochrome b6-f complex, which mediates electron transfer between photosystem II (PSII) and photosystem I (PSI), cyclic electron flow around PSI, and state transitions. In Chlamydomonas reinhardtii (Chlamydomonas smithii), this protein is Cytochrome b6-f complex iron-sulfur subunit, chloroplastic (petC).